A 224-amino-acid polypeptide reads, in one-letter code: Toxin coregulated pilin (224 aa).

Residues 1–25 (MQLLKQLFKKKFVKEEHDKKTGQEG) constitute a propeptide, atypical leader sequence. The residue at position 26 (M26) is an N-methylmethionine. Residues 26–46 (MTLLEVIIVLGIMGVVSAGVV) traverse the membrane as a helical segment. C145 and C211 form a disulfide bridge.

It localises to the fimbrium. Its subcellular location is the membrane. In terms of biological role, major component of the toxin co-regulated pilus (tcp) which is a type IV pilus essential for bacterial aggregation and subsequent colonization in the host small intestine. The chain is Toxin coregulated pilin (tcpA) from Vibrio cholerae serotype O1 (strain ATCC 39315 / El Tor Inaba N16961).